A 282-amino-acid chain; its full sequence is Pantothenate synthetase (282 aa).

Residue 30 to 37 (MGYLHEGH) participates in ATP binding. Histidine 37 acts as the Proton donor in catalysis. (R)-pantoate is bound at residue glutamine 61. A beta-alanine-binding site is contributed by glutamine 61. An ATP-binding site is contributed by 147–150 (GMKD). Glutamine 153 lines the (R)-pantoate pocket. Residues valine 176 and 184-187 (KSSR) each bind ATP.

This sequence belongs to the pantothenate synthetase family. Homodimer.

The protein resides in the cytoplasm. The catalysed reaction is (R)-pantoate + beta-alanine + ATP = (R)-pantothenate + AMP + diphosphate + H(+). It functions in the pathway cofactor biosynthesis; (R)-pantothenate biosynthesis; (R)-pantothenate from (R)-pantoate and beta-alanine: step 1/1. Functionally, catalyzes the condensation of pantoate with beta-alanine in an ATP-dependent reaction via a pantoyl-adenylate intermediate. This is Pantothenate synthetase from Bacillus thuringiensis (strain Al Hakam).